Consider the following 676-residue polypeptide: Multisubstrate pseudouridine synthase 7 (676 aa).

Disordered regions lie at residues 1 to 27 (MSDSSEATVKRPLDAHVGPSENAAKKL) and 87 to 110 (KMPKKPQRSKEEVNAEKESEAARR). Serine 2 is modified (N-acetylserine). The segment covering 94–110 (RSKEEVNAEKESEAARR) has biased composition (basic and acidic residues). Aspartate 256 (nucleophile) is an active-site residue. Positions 338–582 (GFINYFGMQR…AGSYRTVIQK (245 aa)) constitute a TRUD domain.

It belongs to the pseudouridine synthase TruD family.

It is found in the nucleus. Its subcellular location is the cytoplasm. It carries out the reaction uridine in 5S rRNA = pseudouridine in 5S rRNA. The catalysed reaction is uridine in snRNA = pseudouridine in snRNA. The enzyme catalyses uridine(13) in tRNA = pseudouridine(13) in tRNA. It catalyses the reaction a uridine in mRNA = a pseudouridine in mRNA. Its function is as follows. Catalyzes pseudouridylation at position 35 in U2 snRNA stem-loop II region which induces particular conformation of the mRNA-U2 snRNA duplex and places the nucleophile in an accessible position for the first step of splicing. Also catalyzes pseudouridylation at position 56 in U2 snRNA. Also catalyzes pseudouridylation at position 50 in 5S rRNA, position 13 in cytoplasmic tRNAs, and position 35 in pre-tRNA(Tyr). Pseudouridine residues in tRNAs may stabilize the local RNA conformation, favor interactions with protein partners and play an important role in the stabilization of the codon-anticodon interaction with mRNA. Also catalyzes pseudouridylation of mRNAs in response to heat shock: mediates pseudouridylation of mRNAs with the consensus sequence 5'-UGUAR-3'. The sequence is that of Multisubstrate pseudouridine synthase 7 from Saccharomyces cerevisiae (strain ATCC 204508 / S288c) (Baker's yeast).